The primary structure comprises 177 residues: Large ribosomal subunit protein uL6 (177 aa).

The protein belongs to the universal ribosomal protein uL6 family. Part of the 50S ribosomal subunit.

In terms of biological role, this protein binds to the 23S rRNA, and is important in its secondary structure. It is located near the subunit interface in the base of the L7/L12 stalk, and near the tRNA binding site of the peptidyltransferase center. This is Large ribosomal subunit protein uL6 from Halorhodospira halophila (strain DSM 244 / SL1) (Ectothiorhodospira halophila (strain DSM 244 / SL1)).